The following is a 258-amino-acid chain: Putative ankyrin repeat domain-containing protein 30B-like (258 aa).

Positions 1-21 are disordered; sequence MERLSAAPVKGQTGPERPSPF. ANK repeat units lie at residues 71–100, 104–133, 137–166, and 170–199; these read KKRTALYWACANGHAEVVTLLVDRKCQLDV, ENRTILMKALQCQREACANILIDSGADPNI, YGNTAVHYAVNSENLSVVAKLLSCGADIEV, and AGHTPLLLAIRKRSEEIVEFLLTKNANANA. Positions 216 to 258 are disordered; sequence KISKNSQNSNPEGTSEGTPDEAAPLAERTPDTAESLVERTPDE. Residues 218–232 show a composition bias toward polar residues; that stretch reads SKNSQNSNPEGTSEG. A compositionally biased stretch (basic and acidic residues) spans 243-258; sequence RTPDTAESLVERTPDE.

The polypeptide is Putative ankyrin repeat domain-containing protein 30B-like (ANKRD30BL) (Homo sapiens (Human)).